The following is a 518-amino-acid chain: Xaa-Pro aminopeptidase 3 (518 aa).

The N-terminal 48 residues, 1–48 (MNNICKLNKFIISKSSSSLSSTSSKIKTNCLIKNAKMFSSSLNLNRFY), are a transit peptide targeting the mitochondrion. Substrate contacts are provided by tyrosine 314, aspartate 345, aspartate 356, histidine 434, histidine 441, glutamate 461, and glutamate 485. 3 residues coordinate Mn(2+): aspartate 345, aspartate 356, and histidine 434. Mn(2+) is bound by residues glutamate 461 and glutamate 485.

The protein belongs to the peptidase M24B family. As to quaternary structure, homodimer. The cofactor is Mn(2+).

The protein localises to the mitochondrion. It is found in the cytoplasm. The catalysed reaction is Release of any N-terminal amino acid, including proline, that is linked to proline, even from a dipeptide or tripeptide.. Functionally, catalyzes the removal of a penultimate prolyl residue from the N-termini of peptides, such as Leu-Pro-Ala. Also shows low activity towards peptides with Ala or Ser at the P1 position. The protein is Xaa-Pro aminopeptidase 3 (xpnpep3) of Dictyostelium discoideum (Social amoeba).